Reading from the N-terminus, the 477-residue chain is Cytochrome c oxidase subunit 1 (477 aa).

Residues 16-36 (VGTMYLMLGMWSGFGGLNLSW) traverse the membrane as a helical segment. 2 residues coordinate Ca(2+): glutamate 41 and glycine 46. Histidine 62 serves as a coordination point for Fe(II)-heme a. The next 6 helical transmembrane spans lie at 64–84 (IMMI…NWLL), 101–121 (FSFW…FIDY), 149–171 (ILGL…VTFL), 185–205 (LFVW…PVLA), 236–256 (LFWF…FGLV), and 269–289 (VFGS…GFIV). A Cu cation-binding site is contributed by histidine 242. A cross-link (1'-histidyl-3'-tyrosine (His-Tyr)) is located at residues 242-246 (HPEVY). Tyrosine 246 provides a ligand contact to O2. Residues histidine 292 and histidine 293 each contribute to the Cu cation site. 2 helical membrane-spanning segments follow: residues 309-329 (AVTM…IATI) and 340-360 (TLWV…GVIL). Residues histidine 370 and aspartate 371 each coordinate Mg(2+). Residue histidine 378 coordinates heme a3. Histidine 380 is a binding site for Fe(II)-heme a. The next 2 membrane-spanning stretches (helical) occupy residues 382 to 402 (VLSM…FPFF) and 416 to 436 (FFLT…LGLG). Ca(2+) is bound at residue proline 443. The chain crosses the membrane as a helical span at residues 455–475 (WSTIGCAMVMVSVSLFIHMQW).

It belongs to the heme-copper respiratory oxidase family. As to quaternary structure, component of the cytochrome c oxidase (complex IV, CIV), a multisubunit enzyme composed of a catalytic core of 3 subunits and several supernumerary subunits. The complex exists as a monomer or a dimer and forms supercomplexes (SCs) in the inner mitochondrial membrane with ubiquinol-cytochrome c oxidoreductase (cytochrome b-c1 complex, complex III, CIII). Heme is required as a cofactor. The cofactor is Cu cation.

It localises to the mitochondrion inner membrane. It catalyses the reaction 4 Fe(II)-[cytochrome c] + O2 + 8 H(+)(in) = 4 Fe(III)-[cytochrome c] + 2 H2O + 4 H(+)(out). Its pathway is energy metabolism; oxidative phosphorylation. Its function is as follows. Component of the cytochrome c oxidase, the last enzyme in the mitochondrial electron transport chain which drives oxidative phosphorylation. The respiratory chain contains 3 multisubunit complexes succinate dehydrogenase (complex II, CII), ubiquinol-cytochrome c oxidoreductase (cytochrome b-c1 complex, complex III, CIII) and cytochrome c oxidase (complex IV, CIV), that cooperate to transfer electrons derived from NADH and succinate to molecular oxygen, creating an electrochemical gradient over the inner membrane that drives transmembrane transport and the ATP synthase. Cytochrome c oxidase is the component of the respiratory chain that catalyzes the reduction of oxygen to water. Electrons originating from reduced cytochrome c in the intermembrane space (IMS) are transferred via the dinuclear copper A center (CU(A)) of subunit 2 and heme A of subunit 1 to the active site in subunit 1, a binuclear center (BNC) formed by heme A3 and copper B (CU(B)). The BNC reduces molecular oxygen to 2 water molecules using 4 electrons from cytochrome c in the IMS and 4 protons from the mitochondrial matrix. The chain is Cytochrome c oxidase subunit 1 (COI) from Pecten maximus (King scallop).